A 252-amino-acid chain; its full sequence is tRNA (guanine-N(1)-)-methyltransferase (252 aa).

S-adenosyl-L-methionine-binding positions include Gly-118 and 138–143; that span reads IGDYVL.

This sequence belongs to the RNA methyltransferase TrmD family. Homodimer.

The protein resides in the cytoplasm. The catalysed reaction is guanosine(37) in tRNA + S-adenosyl-L-methionine = N(1)-methylguanosine(37) in tRNA + S-adenosyl-L-homocysteine + H(+). Its function is as follows. Specifically methylates guanosine-37 in various tRNAs. The chain is tRNA (guanine-N(1)-)-methyltransferase from Pseudomonas paraeruginosa (strain DSM 24068 / PA7) (Pseudomonas aeruginosa (strain PA7)).